The following is a 239-amino-acid chain: Probable phosphatase Csac_1188 (239 aa).

Positions 8, 10, 16, 41, 74, 102, 132, 192, and 194 each coordinate Zn(2+).

It belongs to the PHP family. It depends on Zn(2+) as a cofactor.

The protein is Probable phosphatase Csac_1188 of Caldicellulosiruptor saccharolyticus (strain ATCC 43494 / DSM 8903 / Tp8T 6331).